A 169-amino-acid chain; its full sequence is MKKWMLAICLMFINEICHATDCFDLAGRDYKIDPDLLRAISWKESRYRVNAIGINPVTGYGSGLMQVDSQHFNELARYGIKPEHLTTDPCMNIYTGAYYLAIAFKKWGVSWEAVGAYNAGFRKTERQNQRRLAYASDVYRIYTGIKSSKGIRIPATKKSLPEINSVQNN.

This sequence belongs to the IagB/IpgF/P19 family.

This Escherichia coli (strain K12) protein is X polypeptide (yubQ).